A 449-amino-acid polypeptide reads, in one-letter code: UDP-glycosyltransferase 76E7 (449 aa).

UDP-alpha-D-glucose is bound by residues S275, 333-335 (APQ), 350-358 (HCGWNSTLE), and 372-375 (TTDQ).

It belongs to the UDP-glycosyltransferase family.

The protein is UDP-glycosyltransferase 76E7 (UGT76E7) of Arabidopsis thaliana (Mouse-ear cress).